Consider the following 80-residue polypeptide: UPF0057 membrane protein ZK632.10 (80 aa).

2 helical membrane-spanning segments follow: residues 4–24 and 32–52; these read ILLA…DVGC and ILLT…IILC.

It belongs to the UPF0057 (PMP3) family.

The protein resides in the membrane. The polypeptide is UPF0057 membrane protein ZK632.10 (Caenorhabditis elegans).